The chain runs to 73 residues: Signaling peptide TAXIMIN 2 (73 aa).

The first 27 residues, 1–27, serve as a signal peptide directing secretion; it reads MGDCRPLGFLIGLPFALVALVLALVGA.

As to expression, confined to the vasculature of various organs, including seedling roots, leaves, cotyledons, sepals and petals. Also accumulates in root hair cells.

It localises to the secreted. Signaling peptide involved in the regulation of lateral organs separation. This chain is Signaling peptide TAXIMIN 2, found in Arabidopsis thaliana (Mouse-ear cress).